A 249-amino-acid chain; its full sequence is DNA repair protein RecO (249 aa).

The protein belongs to the RecO family.

Involved in DNA repair and RecF pathway recombination. In Polaromonas naphthalenivorans (strain CJ2), this protein is DNA repair protein RecO.